The sequence spans 426 residues: 3',5'-cyclic-nucleotide phosphodiesterase (426 aa).

Residues 210 to 229 form a disordered region; the sequence is DKEDAQHHSNSNSNSNNIWG.

The protein belongs to the cyclic nucleotide phosphodiesterase class-II family.

The enzyme catalyses a nucleoside 3',5'-cyclic phosphate + H2O = a nucleoside 5'-phosphate + H(+). The chain is 3',5'-cyclic-nucleotide phosphodiesterase (PDE1) from Candida albicans (Yeast).